The primary structure comprises 214 residues: MKFFIDTADVKEIRQAHDLGLVDGVTTNPSLIAKSGRKFEDVIKEITEIVDGPISAEVVSLEAAGMIREAGELAKIHKNIVIKLPMTPEGLKACAALTREGIKTNVTLIFTPMQALLAAKAGATYVSPFVGRLDDISQDGMGIIDDIKTIFDNYGYQSEIIVASVRNPVHVLNAALIGADIATIPYSVMLQLAKHPLTDSGIERFLKDWESVPK.

The Schiff-base intermediate with substrate role is filled by Lys-83.

Belongs to the transaldolase family. Type 3B subfamily.

It is found in the cytoplasm. It carries out the reaction D-sedoheptulose 7-phosphate + D-glyceraldehyde 3-phosphate = D-erythrose 4-phosphate + beta-D-fructose 6-phosphate. It functions in the pathway carbohydrate degradation; pentose phosphate pathway; D-glyceraldehyde 3-phosphate and beta-D-fructose 6-phosphate from D-ribose 5-phosphate and D-xylulose 5-phosphate (non-oxidative stage): step 2/3. Its function is as follows. Transaldolase is important for the balance of metabolites in the pentose-phosphate pathway. This is Probable transaldolase from Geobacter sulfurreducens (strain ATCC 51573 / DSM 12127 / PCA).